The primary structure comprises 373 residues: MEGYRLDPWASAIRLEYEKLFRYFGIKPFQPLLPEVEKAFGKPHRLMRRGIIFGHRDYEKILEAYRSGERIALVTGFMPSGKFHFGHKMVADQIIYYQKLGFEIFVVIADAEAYAVRRLDRRKIIEIGLYEYVANLIALGLEKNKHTHIYFQTNYETPYYRLIQMFSRRVTLEEMSAIYGDLEPSKIMAALTQAADILHPQLDYFGGFKYVVVPVGADQDPHIRLTRDIAARFENELGLRRPASTYHRFQTGLDGNKMSSSRPEYTIFLTDPVDIAVRKLKRALTGGRATVEEQRRLGGEPEKCTVYEFYLYHLIEDDTQLRKIYEDCRGSRLLCGPDKEYAAELLAKFLEEHQRRLERARDRVLEYVEPPKF.

A 'HIGH' region motif is present at residues 79 to 87; the sequence is PSGKFHFGH. The 'KMSKS' region motif lies at 257–261; sequence KMSSS.

Belongs to the class-I aminoacyl-tRNA synthetase family.

The protein localises to the cytoplasm. The enzyme catalyses tRNA(Trp) + L-tryptophan + ATP = L-tryptophyl-tRNA(Trp) + AMP + diphosphate + H(+). The sequence is that of Tryptophan--tRNA ligase from Hyperthermus butylicus (strain DSM 5456 / JCM 9403 / PLM1-5).